Consider the following 186-residue polypeptide: Ribosome-recycling factor (186 aa).

The protein belongs to the RRF family.

The protein resides in the cytoplasm. In terms of biological role, responsible for the release of ribosomes from messenger RNA at the termination of protein biosynthesis. May increase the efficiency of translation by recycling ribosomes from one round of translation to another. The protein is Ribosome-recycling factor of Cupriavidus necator (strain ATCC 17699 / DSM 428 / KCTC 22496 / NCIMB 10442 / H16 / Stanier 337) (Ralstonia eutropha).